A 1857-amino-acid chain; its full sequence is U3 small nucleolar RNA-associated protein 10 (1857 aa).

Residues 267-287 (LTAYSIISVLSSLVPLSADLV) traverse the membrane as a helical segment. The HEAT repeat unit spans residues 1817 to 1855 (LIPYIAELLEDDDEEVELEVRNGLVRVIENVLGEPLDRY).

Belongs to the HEATR1/UTP10 family. As to quaternary structure, component of the ribosomal small subunit (SSU) processome.

The protein resides in the nucleus. It is found in the nucleolus. Its subcellular location is the membrane. Its function is as follows. Involved in nucleolar processing of pre-18S ribosomal RNA. Involved in ribosome biosynthesis. This is U3 small nucleolar RNA-associated protein 10 from Debaryomyces hansenii (strain ATCC 36239 / CBS 767 / BCRC 21394 / JCM 1990 / NBRC 0083 / IGC 2968) (Yeast).